The chain runs to 174 residues: Scytalone dehydratase-like protein Arp1 (174 aa).

Tyr-49 is a binding site for substrate. Active-site residues include His-84 and His-109. Residue Asn-130 coordinates substrate.

This sequence belongs to the scytalone dehydratase family. In terms of assembly, homotrimer. Each subunit contains an active site, located in the central part of the hydrophobic core of the monomer, which functions independently.

Scytalone dehydratase-like protein; part of the Pks2 gene cluster that mediates the formation of infectious structures (appressoria), enabling these fungi to kill insects faster. The product of the Pks2 gene cluster is different from the one of Pks1 and has still not been identified. This is Scytalone dehydratase-like protein Arp1 from Metarhizium majus (strain ARSEF 297).